We begin with the raw amino-acid sequence, 507 residues long: Extracellular elastase (507 aa).

A signal peptide spans 1–28 (MKNFSKFALTSIAALTVASPLVNTEVDA). The propeptide occupies 29–207 (KDKVSATQNI…VVDKLNMIKE (179 aa)). Residue D347 participates in Ca(2+) binding. H351 lines the Zn(2+) pocket. E352 is an active-site residue. Zn(2+) is bound by residues H355 and E375. Ca(2+) contacts are provided by D386, E388, D389, L391, E394, Y397, T398, V401, and D404. H435 (proton donor) is an active-site residue.

This sequence belongs to the peptidase M4 family. Requires Ca(2+) as cofactor. Zn(2+) serves as cofactor.

The protein localises to the secreted. Protease that has a low substrate specificity. Glucagon is preferentially cleaved between aromatic (Phe) and hydrophobic (Val) amino acids. Hydrolyzes casein and elastin. In Staphylococcus epidermidis (strain ATCC 12228 / FDA PCI 1200), this protein is Extracellular elastase (sepA).